The primary structure comprises 421 residues: MNRGFSRKSHTFLPKIFFRKMSSSGAKDKPELQFPFLQDEDTVATLLECKTLFILRGLPGSGKSTLARVIVDKYRDGTKMVSADAYKITPGARGAFSEEYKRLDEDLAAYCRRRDIRILVLDDTNHERERLEQLFEMADQYQYQVVLVEPKTAWRLDCAQLKEKNQWQLSADDLKKLKPGLEKDFLPLYFGWFLTKKSSETLRKAGQVFLEELGNHKAFKKELRQFVPGDEPREKMDLVTYFGKRPPGVLHCTTKFCDYGKAPGAEEYAQQDVLKKSYSKAFTLTISALFVTPKTTGARVELSEQQLQLWPSDVDKLSPTDNLPRGSRAHITLGCAADVEAVQTGLDLLEILRQEKGGSRGEEVGELSRGKLYSLGNGRWMLTLAKNMEVRAIFTGYYGKGKPVPTQGSRKGGALQSCTII.

S6 and S9 each carry phosphoserine. Y110 is subject to Phosphotyrosine. S170 carries the phosphoserine modification. The active-site Proton acceptor is H251. A substrate-binding site is contributed by T253. The active-site Proton donor is H330. T332 is a binding site for substrate. At S359 the chain carries Phosphoserine. A Cysteine methyl ester modification is found at C418. C418 carries S-farnesyl cysteine lipidation. Positions 419–421 are cleaved as a propeptide — removed in mature form; it reads TII.

The protein belongs to the 2H phosphoesterase superfamily. CNPase family. In terms of assembly, exists as monomers and homodimers.

The protein localises to the membrane. The protein resides in the melanosome. The catalysed reaction is a nucleoside 2',3'-cyclic phosphate + H2O = a nucleoside 2'-phosphate + H(+). Catalyzes the formation of 2'-nucleotide products from 2',3'-cyclic substrates. May participate in RNA metabolism in the myelinating cell, CNP is the third most abundant protein in central nervous system myelin. The protein is 2',3'-cyclic-nucleotide 3'-phosphodiesterase of Homo sapiens (Human).